The sequence spans 410 residues: UDP-N-acetylglucosamine--N-acetylmuramyl-(pentapeptide) pyrophosphoryl-undecaprenol N-acetylglucosamine transferase (410 aa).

The interval methionine 1 to serine 35 is disordered. Low complexity predominate over residues alanine 14 to serine 35. UDP-N-acetyl-alpha-D-glucosamine is bound by residues threonine 45–glycine 47, asparagine 167, arginine 204, serine 238, and glutamine 334.

Belongs to the glycosyltransferase 28 family. MurG subfamily.

It localises to the cell membrane. The enzyme catalyses di-trans,octa-cis-undecaprenyl diphospho-N-acetyl-alpha-D-muramoyl-L-alanyl-D-glutamyl-meso-2,6-diaminopimeloyl-D-alanyl-D-alanine + UDP-N-acetyl-alpha-D-glucosamine = di-trans,octa-cis-undecaprenyl diphospho-[N-acetyl-alpha-D-glucosaminyl-(1-&gt;4)]-N-acetyl-alpha-D-muramoyl-L-alanyl-D-glutamyl-meso-2,6-diaminopimeloyl-D-alanyl-D-alanine + UDP + H(+). Its pathway is cell wall biogenesis; peptidoglycan biosynthesis. In terms of biological role, cell wall formation. Catalyzes the transfer of a GlcNAc subunit on undecaprenyl-pyrophosphoryl-MurNAc-pentapeptide (lipid intermediate I) to form undecaprenyl-pyrophosphoryl-MurNAc-(pentapeptide)GlcNAc (lipid intermediate II). The sequence is that of UDP-N-acetylglucosamine--N-acetylmuramyl-(pentapeptide) pyrophosphoryl-undecaprenol N-acetylglucosamine transferase from Mycobacterium tuberculosis (strain ATCC 25177 / H37Ra).